Here is a 61-residue protein sequence, read N- to C-terminus: MAKKALIEKSNRKPKYAVRGYTRCQRCGRSRSVYRVFGLCRVCLRQMAHRGELPGITKSSW.

The Zn(2+) site is built by C24, C27, C40, and C43.

The protein belongs to the universal ribosomal protein uS14 family. Zinc-binding uS14 subfamily. In terms of assembly, part of the 30S ribosomal subunit. Contacts proteins S3 and S10. The cofactor is Zn(2+).

Functionally, binds 16S rRNA, required for the assembly of 30S particles and may also be responsible for determining the conformation of the 16S rRNA at the A site. The sequence is that of Small ribosomal subunit protein uS14 from Frankia alni (strain DSM 45986 / CECT 9034 / ACN14a).